Consider the following 322-residue polypeptide: Olfactory receptor 5P2 (322 aa).

Residues 1 to 28 lie on the Extracellular side of the membrane; that stretch reads MNSLKDGNHTALTGFILLGLTDDPILRV. The N-linked (GlcNAc...) asparagine glycan is linked to Asn8. The chain crosses the membrane as a helical span at residues 29–42; it reads ILFMIILSGNLSII. Residues 43 to 50 are Cytoplasmic-facing; the sequence is ILIRISSQ. The helical transmembrane segment at 51–71 threads the bilayer; the sequence is LHHPMYFFLSHLAFADMAYSS. Residues 72–95 lie on the Extracellular side of the membrane; it reads SVTPNMLVNFLVERNTVSYLGCAI. An intrachain disulfide couples Cys93 to Cys185. The helical transmembrane segment at 96–116 threads the bilayer; it reads QLGSAAFFATVECVLLAAMAY. The Cytoplasmic portion of the chain corresponds to 117-135; that stretch reads DRFVAICSPLLYSTKMSTQ. The helical transmembrane segment at 136–156 threads the bilayer; sequence VSVQLLLVVYIAGFLIAVSYT. Topologically, residues 157–192 are extracellular; that stretch reads TSFYFLLFCGPNQVNHFFCDFAPLLELSCSDISVST. A helical membrane pass occupies residues 193-213; sequence VVLSFSSGSIIVVTVCVIAVC. Residues 214-233 lie on the Cytoplasmic side of the membrane; that stretch reads YIYILITILKMRSTEGHHKA. Residues 234–254 form a helical membrane-spanning segment; sequence FSTCTSHLTVVTLFYGTITFI. Residues 255–267 are Extracellular-facing; it reads YVMPNFSYSTDQN. An N-linked (GlcNAc...) asparagine glycan is attached at Asn259. The chain crosses the membrane as a helical span at residues 268–288; that stretch reads KVVSVLYTVVIPMLNPLIYSL. Topologically, residues 289 to 322 are cytoplasmic; it reads RNKEIKGALKRELVRKILSHDACYFSRTSNNDIT.

Belongs to the G-protein coupled receptor 1 family. In terms of tissue distribution, expressed in the tongue.

The protein resides in the cell membrane. Its function is as follows. Odorant receptor (Potential). May be involved in taste perception. This chain is Olfactory receptor 5P2 (OR5P2), found in Homo sapiens (Human).